The following is a 451-amino-acid chain: Metalloprotease MJ0996 (451 aa).

The protein belongs to the peptidase U62 family.

Probable metalloprotease. The polypeptide is Metalloprotease MJ0996 (Methanocaldococcus jannaschii (strain ATCC 43067 / DSM 2661 / JAL-1 / JCM 10045 / NBRC 100440) (Methanococcus jannaschii)).